Reading from the N-terminus, the 32-residue chain is Natriuretic peptide Coa_NP1 (32 aa).

Cys8 and Cys24 form a disulfide bridge.

It belongs to the natriuretic peptide family. Snake NP subfamily. Expressed by the venom gland.

Its subcellular location is the secreted. Functionally, snake venom natriuretic peptide that exhibits hypotensive and vasodepressor activity in rats. This chain is Natriuretic peptide Coa_NP1, found in Crotalus lutosus abyssus (Grand Canyon rattlesnake).